A 664-amino-acid chain; its full sequence is Translation factor guf1, mitochondrial (664 aa).

The N-terminal 43 residues, Met1 to Ala43, are a transit peptide targeting the mitochondrion. The tr-type G domain maps to Glu66 to Ile246. GTP-binding positions include Ala75 to Ser82, Asp139 to His143, and Asn193 to Asp196.

This sequence belongs to the TRAFAC class translation factor GTPase superfamily. Classic translation factor GTPase family. LepA subfamily.

Its subcellular location is the mitochondrion inner membrane. The enzyme catalyses GTP + H2O = GDP + phosphate + H(+). In terms of biological role, promotes mitochondrial protein synthesis. May act as a fidelity factor of the translation reaction, by catalyzing a one-codon backward translocation of tRNAs on improperly translocated ribosomes. Binds to mitochondrial ribosomes in a GTP-dependent manner. This is Translation factor guf1, mitochondrial (guf1) from Aspergillus clavatus (strain ATCC 1007 / CBS 513.65 / DSM 816 / NCTC 3887 / NRRL 1 / QM 1276 / 107).